We begin with the raw amino-acid sequence, 470 residues long: AAA-ATPase At5g17730 (470 aa).

The signal sequence occupies residues 1 to 18 (MFSLRNLPSLAPFVSAYA). Residue 252 to 259 (GPPGTGKT) participates in ATP binding.

This sequence belongs to the AAA ATPase family. BCS1 subfamily. Mg(2+) is required as a cofactor.

The catalysed reaction is ATP + H2O = ADP + phosphate + H(+). The protein is AAA-ATPase At5g17730 of Arabidopsis thaliana (Mouse-ear cress).